The sequence spans 411 residues: Glycogen synthase kinase-3 homolog MsK-2 (411 aa).

One can recognise a Protein kinase domain in the interval 74 to 358 (YMAERAVGQG…ALEALVHPFF (285 aa)). ATP contacts are provided by residues 80 to 88 (VGQGSFGVV) and Lys-103. Catalysis depends on Asp-199, which acts as the Proton acceptor. Tyr-234 carries the post-translational modification Phosphotyrosine.

Belongs to the protein kinase superfamily. CMGC Ser/Thr protein kinase family. GSK-3 subfamily. Absent in leaves and petioles while a moderate expression is seen in the stems, roots, and nodes.

It carries out the reaction L-seryl-[protein] + ATP = O-phospho-L-seryl-[protein] + ADP + H(+). It catalyses the reaction L-threonyl-[protein] + ATP = O-phospho-L-threonyl-[protein] + ADP + H(+). This Medicago sativa (Alfalfa) protein is Glycogen synthase kinase-3 homolog MsK-2 (MSK-2).